Here is a 128-residue protein sequence, read N- to C-terminus: Large ribosomal subunit protein eL8 (128 aa).

The protein belongs to the eukaryotic ribosomal protein eL8 family. Part of the 50S ribosomal subunit. Probably part of the RNase P complex.

The protein resides in the cytoplasm. Functionally, multifunctional RNA-binding protein that recognizes the K-turn motif in ribosomal RNA, the RNA component of RNase P, box H/ACA, box C/D and box C'/D' sRNAs. In Ignicoccus hospitalis (strain KIN4/I / DSM 18386 / JCM 14125), this protein is Large ribosomal subunit protein eL8.